Reading from the N-terminus, the 1693-residue chain is Putative stoned B-like protein (1693 aa).

Residues 1-12 show a composition bias toward basic and acidic residues; that stretch reads MSWRDRDFDPHG. 7 disordered regions span residues 1–54, 222–322, 334–371, 383–438, 585–807, 841–869, and 899–1024; these read MSWR…ELPA, NQIP…VEKS, TVEITSPDAPHQGAFHDNTPKEPKVVEEEEDDDLPTFS, KEMT…DPNA, GDYH…TSAA, KKMEKLQKKKLKQQGKKAATPTLEPDEED, and PVKE…FVAD. A compositionally biased stretch (low complexity) spans 26–39; the sequence is SSSERAASMRAMRS. Basic and acidic residues-rich tracts occupy residues 279–301 and 311–322; these read MEDKMEQAEEKARKEEKKEKEET and TTEKHQNEVEKS. Residues 360–371 show a composition bias toward acidic residues; the sequence is EEEEDDDLPTFS. Residues 393-412 are compositionally biased toward basic and acidic residues; sequence ENVENEKQEDTHISEGHVEY. Polar residues predominate over residues 596-615; it reads DENSTSAISGYEQNGASTSL. A compositionally biased stretch (low complexity) spans 632 to 643; that stretch reads YYQGQEYQQEYY. The DPF 1 motif lies at 684–686; that stretch reads DPF. A compositionally biased stretch (low complexity) spans 708–722; the sequence is SPTPEASSSTGTSAP. Positions 745–760 are enriched in pro residues; sequence PPRPPPAARPPPPRPA. Polar residues predominate over residues 786–807; it reads KVSTAVKSTESTLKNLEETSAA. Residues 899 to 913 are compositionally biased toward basic and acidic residues; that stretch reads PVKEIKKAPEIRRVD. Short sequence motifs (DPF) lie at residues 1006–1008, 1024–1026, and 1039–1041; these read DPF. A disordered region spans residues 1062–1095; sequence ANAENEDDFYNGRQSPTLSTPTPEGGSPISQQRP. The segment covering 1073-1095 has biased composition (polar residues); it reads GRQSPTLSTPTPEGGSPISQQRP. The 148-residue stretch at 1136-1283 folds into the SHD domain; that stretch reads GWDLMVRHPI…KCKITRTAKP (148 aa). Residues 1287-1606 enclose the MHD domain; that stretch reads QDEVQIHCYD…AKYQYKVEID (320 aa). The tract at residues 1633 to 1693 is disordered; that stretch reads ELHQPTFNPS…IQIDMKNYGY (61 aa). Residues 1637 to 1651 show a composition bias toward polar residues; the sequence is PTFNPSTQESDTQQG.

This sequence belongs to the Stoned B family.

The protein localises to the cytoplasm. Potential adapter protein, which may be involved in endocytic vesicle recycling of synaptic vesicles. This is Putative stoned B-like protein (unc-41) from Caenorhabditis elegans.